The sequence spans 327 residues: Gamma-resorcylate decarboxylase (327 aa).

Zn(2+) contacts are provided by Glu8, His10, His164, and Asp287. Asp287 is a catalytic residue.

This sequence belongs to the metallo-dependent hydrolases superfamily. ACMSD family. In terms of assembly, homotetramer. Requires Zn(2+) as cofactor.

It carries out the reaction 2,6-dihydroxybenzoate + H(+) = resorcinol + CO2. It catalyses the reaction 2,3-dihydroxybenzoate + H(+) = catechol + CO2. The protein operates within aromatic compound metabolism. Insensitive to oxygen. Decarboxylation and carboxylation are inhibited by AgNO(3) and by diethyl pyrocarbonate, a histidine residue-specific inhibitor. Decarboxylation is also inhibited by HgCl(2) and activated by MgCl(2). Functionally, involved in the gamma-resorcylate (2,6-dihydroxybenzoate) catabolism. Catalyzes the reversible decarboxylation of gamma-resorcylate to resorcinol. Also catalyzes the decarboxylation of 2,3-dihydroxybenzoate to catechol, but does not act on 2-hydroxybenzoic acid 3-hydroxybenzoic acid, 4-hydroxybenzoic acid, 3,4-dihydroxybenzoic acid, 2,5-dihydroxybenzoic acid, 2,3,4-trihydroxybenzoic acid, 3,4,5-trihydroxybenzoic acid, 4-aminobenzoic acid, o-hydroxyphenylacetic acid and vanillic acid. Resorcinol and catechol can both be carboxylated by the reverse reaction. In Rhizobium radiobacter (Agrobacterium tumefaciens), this protein is Gamma-resorcylate decarboxylase.